Reading from the N-terminus, the 528-residue chain is Arginine--tRNA ligase (528 aa).

Positions 112–122 (ANPTGPLHIGH) match the 'HIGH' region motif.

The protein belongs to the class-I aminoacyl-tRNA synthetase family. In terms of assembly, monomer.

The protein localises to the cytoplasm. The catalysed reaction is tRNA(Arg) + L-arginine + ATP = L-arginyl-tRNA(Arg) + AMP + diphosphate. The sequence is that of Arginine--tRNA ligase from Wolinella succinogenes (strain ATCC 29543 / DSM 1740 / CCUG 13145 / JCM 31913 / LMG 7466 / NCTC 11488 / FDC 602W) (Vibrio succinogenes).